The primary structure comprises 344 residues: Methionine aminopeptidase 1C, chloroplastic/mitochondrial (344 aa).

Histidine 172 contacts substrate. Aspartate 189, aspartate 200, and histidine 262 together coordinate a divalent metal cation. Histidine 269 contacts substrate. A divalent metal cation contacts are provided by glutamate 296 and glutamate 327.

It belongs to the peptidase M24A family. Methionine aminopeptidase type 1 subfamily. The cofactor is Co(2+). Requires Zn(2+) as cofactor. Mn(2+) serves as cofactor. It depends on Fe(2+) as a cofactor. In terms of tissue distribution, ubiquitous.

It is found in the plastid. It localises to the chloroplast. Its subcellular location is the mitochondrion. It carries out the reaction Release of N-terminal amino acids, preferentially methionine, from peptides and arylamides.. Its function is as follows. Removes the N-terminal methionine from nascent proteins. The N-terminal methionine is often cleaved when the second residue in the primary sequence is small and uncharged (Met-Ala-, Cys, Gly, Pro, Ser, Thr, or Val). This is Methionine aminopeptidase 1C, chloroplastic/mitochondrial (MAP1C) from Arabidopsis thaliana (Mouse-ear cress).